The sequence spans 477 residues: Ribulose bisphosphate carboxylase large chain (477 aa).

A propeptide spanning residues 1 to 2 (MS) is cleaved from the precursor. Pro3 is subject to N-acetylproline. Lys14 carries the post-translational modification N6,N6,N6-trimethyllysine. The substrate site is built by Asn123 and Thr173. Catalysis depends on Lys175, which acts as the Proton acceptor. Lys177 provides a ligand contact to substrate. Mg(2+)-binding residues include Lys201, Asp203, and Glu204. Lys201 bears the N6-carboxylysine mark. The active-site Proton acceptor is His294. Positions 295, 327, and 379 each coordinate substrate.

This sequence belongs to the RuBisCO large chain family. Type I subfamily. As to quaternary structure, heterohexadecamer of 8 large chains and 8 small chains; disulfide-linked. The disulfide link is formed within the large subunit homodimers. It depends on Mg(2+) as a cofactor. Post-translationally, the disulfide bond which can form in the large chain dimeric partners within the hexadecamer appears to be associated with oxidative stress and protein turnover.

The protein resides in the plastid. The protein localises to the chloroplast. It catalyses the reaction 2 (2R)-3-phosphoglycerate + 2 H(+) = D-ribulose 1,5-bisphosphate + CO2 + H2O. It carries out the reaction D-ribulose 1,5-bisphosphate + O2 = 2-phosphoglycolate + (2R)-3-phosphoglycerate + 2 H(+). Functionally, ruBisCO catalyzes two reactions: the carboxylation of D-ribulose 1,5-bisphosphate, the primary event in carbon dioxide fixation, as well as the oxidative fragmentation of the pentose substrate in the photorespiration process. Both reactions occur simultaneously and in competition at the same active site. The sequence is that of Ribulose bisphosphate carboxylase large chain from Hyophorbe lagenicaulis (Bottle palm).